The chain runs to 535 residues: CTP synthase (535 aa).

An amidoligase domain region spans residues M1–L270. S16 is a binding site for CTP. S16 is a UTP binding site. ATP is bound at residue S17 to I22. Position 57 (Y57) interacts with L-glutamine. D74 is a binding site for ATP. Mg(2+) contacts are provided by D74 and E144. CTP-binding positions include D151–E153, K191–Q196, and K227. UTP is bound by residues K191–Q196 and K227. A Glutamine amidotransferase type-1 domain is found at K295–K535. G357 provides a ligand contact to L-glutamine. C384 serves as the catalytic Nucleophile; for glutamine hydrolysis. L-glutamine is bound by residues L385–Q388, E408, and R465. Catalysis depends on residues H510 and E512.

Belongs to the CTP synthase family. In terms of assembly, homotetramer.

The enzyme catalyses UTP + L-glutamine + ATP + H2O = CTP + L-glutamate + ADP + phosphate + 2 H(+). The catalysed reaction is L-glutamine + H2O = L-glutamate + NH4(+). It carries out the reaction UTP + NH4(+) + ATP = CTP + ADP + phosphate + 2 H(+). It functions in the pathway pyrimidine metabolism; CTP biosynthesis via de novo pathway; CTP from UDP: step 2/2. Its activity is regulated as follows. Allosterically activated by GTP, when glutamine is the substrate; GTP has no effect on the reaction when ammonia is the substrate. The allosteric effector GTP functions by stabilizing the protein conformation that binds the tetrahedral intermediate(s) formed during glutamine hydrolysis. Inhibited by the product CTP, via allosteric rather than competitive inhibition. Functionally, catalyzes the ATP-dependent amination of UTP to CTP with either L-glutamine or ammonia as the source of nitrogen. Regulates intracellular CTP levels through interactions with the four ribonucleotide triphosphates. This Clostridium perfringens (strain ATCC 13124 / DSM 756 / JCM 1290 / NCIMB 6125 / NCTC 8237 / Type A) protein is CTP synthase.